Consider the following 532-residue polypeptide: Glutamate--cysteine ligase (532 aa).

It belongs to the glutamate--cysteine ligase type 1 family. Type 1 subfamily.

It catalyses the reaction L-cysteine + L-glutamate + ATP = gamma-L-glutamyl-L-cysteine + ADP + phosphate + H(+). It functions in the pathway sulfur metabolism; glutathione biosynthesis; glutathione from L-cysteine and L-glutamate: step 1/2. The sequence is that of Glutamate--cysteine ligase from Pseudomonas fluorescens (strain Pf0-1).